Consider the following 219-residue polypeptide: Thiamine-phosphate synthase (219 aa).

4-amino-2-methyl-5-(diphosphooxymethyl)pyrimidine is bound by residues Gln-44–Lys-48 and Asn-79. Asp-80 and Asp-99 together coordinate Mg(2+). Residue Ser-117 coordinates 4-amino-2-methyl-5-(diphosphooxymethyl)pyrimidine. Thr-143–Thr-145 contributes to the 2-[(2R,5Z)-2-carboxy-4-methylthiazol-5(2H)-ylidene]ethyl phosphate binding site. Lys-146 contacts 4-amino-2-methyl-5-(diphosphooxymethyl)pyrimidine. 2-[(2R,5Z)-2-carboxy-4-methylthiazol-5(2H)-ylidene]ethyl phosphate is bound by residues Gly-175 and Ile-195–Ser-196.

Belongs to the thiamine-phosphate synthase family. Requires Mg(2+) as cofactor.

It carries out the reaction 2-[(2R,5Z)-2-carboxy-4-methylthiazol-5(2H)-ylidene]ethyl phosphate + 4-amino-2-methyl-5-(diphosphooxymethyl)pyrimidine + 2 H(+) = thiamine phosphate + CO2 + diphosphate. The catalysed reaction is 2-(2-carboxy-4-methylthiazol-5-yl)ethyl phosphate + 4-amino-2-methyl-5-(diphosphooxymethyl)pyrimidine + 2 H(+) = thiamine phosphate + CO2 + diphosphate. The enzyme catalyses 4-methyl-5-(2-phosphooxyethyl)-thiazole + 4-amino-2-methyl-5-(diphosphooxymethyl)pyrimidine + H(+) = thiamine phosphate + diphosphate. The protein operates within cofactor biosynthesis; thiamine diphosphate biosynthesis; thiamine phosphate from 4-amino-2-methyl-5-diphosphomethylpyrimidine and 4-methyl-5-(2-phosphoethyl)-thiazole: step 1/1. Condenses 4-methyl-5-(beta-hydroxyethyl)thiazole monophosphate (THZ-P) and 2-methyl-4-amino-5-hydroxymethyl pyrimidine pyrophosphate (HMP-PP) to form thiamine monophosphate (TMP). In Bacillus cereus (strain ATCC 14579 / DSM 31 / CCUG 7414 / JCM 2152 / NBRC 15305 / NCIMB 9373 / NCTC 2599 / NRRL B-3711), this protein is Thiamine-phosphate synthase.